A 259-amino-acid chain; its full sequence is uncharacterized protein (259 aa).

One can recognise an N-acetyltransferase domain in the interval 110 to 259 (QMGHPLTAWG…VHTVFHYFLT (150 aa)).

Functionally, may be involved in maturation of the outermost layer of the spore. This is an uncharacterized protein from Bacillus subtilis (strain 168).